Reading from the N-terminus, the 589-residue chain is Vomeromodulin (589 aa).

A signal peptide spans 1-29 (MWVLQALAIMLSIQAGVLDLVEVPPVVRS). Disordered regions lie at residues 49–71 (GLNDPAKNRMLPPKRPGAPSRGG) and 146–170 (LLGKEGNEDPSKPSSGSKATGGLGQ). 2 N-linked (GlcNAc...) asparagine glycosylation sites follow: N419 and N437.

N-glycosylated. The N-glycans consist mainly of complex sialylated and fucosylated biantennary structures. In terms of tissue distribution, abundant in the lateral nasal glands. Also present in the posterior septal and vomeronasal glands.

It localises to the secreted. The polypeptide is Vomeromodulin (Rattus norvegicus (Rat)).